The sequence spans 185 residues: Regulatory protein RecX (185 aa).

This sequence belongs to the RecX family.

Its subcellular location is the cytoplasm. In terms of biological role, modulates RecA activity. The polypeptide is Regulatory protein RecX (Thermobifida fusca (strain YX)).